The primary structure comprises 576 residues: Arginine--tRNA ligase (576 aa).

Residues 122 to 132 (PNVAKEMHVGH) carry the 'HIGH' region motif.

It belongs to the class-I aminoacyl-tRNA synthetase family. Monomer.

Its subcellular location is the cytoplasm. It catalyses the reaction tRNA(Arg) + L-arginine + ATP = L-arginyl-tRNA(Arg) + AMP + diphosphate. The chain is Arginine--tRNA ligase from Photobacterium profundum (strain SS9).